The sequence spans 381 residues: tRNA (guanine(26)-N(2))-dimethyltransferase (381 aa).

The 373-residue stretch at phenylalanine 6–methionine 378 folds into the Trm1 methyltransferase domain. The S-adenosyl-L-methionine site is built by arginine 38, arginine 63, aspartate 80, aspartate 122, and alanine 123.

The protein belongs to the class I-like SAM-binding methyltransferase superfamily. Trm1 family. In terms of assembly, monomer.

It carries out the reaction guanosine(26) in tRNA + 2 S-adenosyl-L-methionine = N(2)-dimethylguanosine(26) in tRNA + 2 S-adenosyl-L-homocysteine + 2 H(+). Functionally, dimethylates a single guanine residue at position 26 of a number of tRNAs using S-adenosyl-L-methionine as donor of the methyl groups. This Pyrococcus furiosus (strain ATCC 43587 / DSM 3638 / JCM 8422 / Vc1) protein is tRNA (guanine(26)-N(2))-dimethyltransferase.